The primary structure comprises 190 residues: Crossover junction endodeoxyribonuclease RuvC (190 aa).

Residues aspartate 8, glutamate 67, and aspartate 139 contribute to the active site. Residues aspartate 8, glutamate 67, and aspartate 139 each contribute to the Mg(2+) site.

This sequence belongs to the RuvC family. In terms of assembly, homodimer which binds Holliday junction (HJ) DNA. The HJ becomes 2-fold symmetrical on binding to RuvC with unstacked arms; it has a different conformation from HJ DNA in complex with RuvA. In the full resolvosome a probable DNA-RuvA(4)-RuvB(12)-RuvC(2) complex forms which resolves the HJ. It depends on Mg(2+) as a cofactor.

The protein resides in the cytoplasm. The enzyme catalyses Endonucleolytic cleavage at a junction such as a reciprocal single-stranded crossover between two homologous DNA duplexes (Holliday junction).. The RuvA-RuvB-RuvC complex processes Holliday junction (HJ) DNA during genetic recombination and DNA repair. Endonuclease that resolves HJ intermediates. Cleaves cruciform DNA by making single-stranded nicks across the HJ at symmetrical positions within the homologous arms, yielding a 5'-phosphate and a 3'-hydroxyl group; requires a central core of homology in the junction. The consensus cleavage sequence is 5'-(A/T)TT(C/G)-3'. Cleavage occurs on the 3'-side of the TT dinucleotide at the point of strand exchange. HJ branch migration catalyzed by RuvA-RuvB allows RuvC to scan DNA until it finds its consensus sequence, where it cleaves and resolves the cruciform DNA. This Pasteurella multocida (strain Pm70) protein is Crossover junction endodeoxyribonuclease RuvC.